Here is a 431-residue protein sequence, read N- to C-terminus: Chaperone SurA (431 aa).

Positions 1 to 22 (MNLKKLLTSAVLSISLCQSAFA) are cleaved as a signal peptide. PpiC domains are found at residues 173-274 (AEEY…KVQD) and 283-383 (TTET…QLLD).

It localises to the periplasm. It carries out the reaction [protein]-peptidylproline (omega=180) = [protein]-peptidylproline (omega=0). Functionally, chaperone involved in the correct folding and assembly of outer membrane proteins. Recognizes specific patterns of aromatic residues and the orientation of their side chains, which are found more frequently in integral outer membrane proteins. May act in both early periplasmic and late outer membrane-associated steps of protein maturation. In Pseudoalteromonas translucida (strain TAC 125), this protein is Chaperone SurA.